The following is a 228-amino-acid chain: Protein TIFY 10a (228 aa).

A Tify domain is found at 75-110 (REQEKRQLTIFYGGKVLVFDDFPAEKAKDLMQMASK). The Jas signature appears at 164–189 (PQARKASLHRFLEKRKDRLQAKAPYQ). The Nuclear localization signal signature appears at 166 to 173 (ARKASLHR). The disordered stretch occupies residues 175 to 228 (LEKRKDRLQAKAPYQGSPSDASPVKKELQESQPWLGLGPQVAAPDLSLRQESSQ).

Belongs to the TIFY/JAZ family. Interacts with COI1A and COI1B in a coronatine-dependent manner. Coronatine is an analog of jasmonoyl isoleucine (JA-Ile). Post-translationally, ubiquitinated. Targeted for degradation by the SCF(COI1) E3 ubiquitin ligase-proteasome pathway during jasmonate signaling.

It is found in the nucleus. Its function is as follows. Repressor of jasmonate responses. The protein is Protein TIFY 10a of Oryza sativa subsp. japonica (Rice).